The following is a 529-amino-acid chain: Ribonuclease Y (529 aa).

The chain crosses the membrane as a helical span at residues 4–24; sequence GLIYISLEVIVACLISALAMY. The region spanning 216–297 is the KH domain; sequence FTNRIALPCS…NRIEEVYHRV (82 aa). The HD domain occupies 342–435; sequence ALQHSKEVAL…VCAADALSAG (94 aa).

The protein belongs to the RNase Y family.

Its subcellular location is the cell membrane. Endoribonuclease that initiates mRNA decay. The polypeptide is Ribonuclease Y (Helicobacter acinonychis (strain Sheeba)).